The primary structure comprises 873 residues: E3 ubiquitin-protein ligase UPL5 (873 aa).

Residues 1–19 show a composition bias toward polar residues; sequence MTLSRSSADDSTNNANRSY. Disordered stretches follow at residues 1-37 and 70-90; these read MTLSRSSADDSTNNANRSYSAVAGTDNKRKRDEDSSD and RSGENSRSLSSSGECSSSNRP. Residues 95–171 form the Ubiquitin-like domain; that stretch reads LQIFVRMMSG…LQLVARMQST (77 aa). The region spanning 272–296 is the C-type lectin domain; sequence CLPIVLEFCKLLRKVCPDQKLYVTC. The region spanning 532-873 is the HECT domain; that stretch reads SPEALHGGLF…DHVSSSFGKW (342 aa). Residue cysteine 839 is the Glycyl thioester intermediate of the active site.

The protein belongs to the UPL family. In terms of assembly, interacts with WRKY53.

The protein resides in the cytoplasm. It carries out the reaction S-ubiquitinyl-[E2 ubiquitin-conjugating enzyme]-L-cysteine + [acceptor protein]-L-lysine = [E2 ubiquitin-conjugating enzyme]-L-cysteine + N(6)-ubiquitinyl-[acceptor protein]-L-lysine.. The protein operates within protein modification; protein ubiquitination. Its function is as follows. E3 ubiquitin protein ligase that regulates leaf senescence through ubiquitination and subsequent degradation of WRKY53. The chain is E3 ubiquitin-protein ligase UPL5 (UPL5) from Arabidopsis thaliana (Mouse-ear cress).